Reading from the N-terminus, the 241-residue chain is Centromere protein H (241 aa).

M1 carries the post-translational modification N-acetylmethionine. Residues 1 to 24 (MEEQPRERSEAGAEACEEKRGLSQ) are disordered. A coiled-coil region spans residues 28–186 (ERIEDRISLL…KEDVDKMENS (159 aa)). K61 is covalently cross-linked (Glycyl lysine isopeptide (Lys-Gly) (interchain with G-Cter in SUMO2)). T62 is subject to Phosphothreonine.

Belongs to the CENP-H/MCM16 family. Self-associates. Component of the CENPA-NAC complex, at least composed of CENPA, CENPC, CENPH, CENPM, CENPN, CENPT and CENPU. The CENPA-NAC complex interacts with the CENPA-CAD complex, composed of CENPI, CENPK, CENPL, CENPO, CENPP, CENPQ, CENPR and CENPS. Interacts directly with CENPK. Interacts with KIF2C and NDC80. Interacts with TRIM36. As to expression, abundantly expressed in thymus, spleen, uterus, ovary, testis and muscle, and weakly expressed in small intestine, lung and stomach. Barely detectable expression in kidney, liver, skin and prostate gland. Not detected in brain, heart or adrenal gland. Also expressed weakly in various hematopoietic cell lines.

It localises to the nucleus. The protein localises to the chromosome. It is found in the centromere. The protein resides in the kinetochore. Component of the CENPA-NAC (nucleosome-associated) complex, a complex that plays a central role in assembly of kinetochore proteins, mitotic progression and chromosome segregation. The CENPA-NAC complex recruits the CENPA-CAD (nucleosome distal) complex and may be involved in incorporation of newly synthesized CENPA into centromeres. Required for chromosome congression and efficiently align the chromosomes on a metaphase plate. The chain is Centromere protein H from Mus musculus (Mouse).